We begin with the raw amino-acid sequence, 150 residues long: Large ribosomal subunit protein bL9 (150 aa).

This sequence belongs to the bacterial ribosomal protein bL9 family.

In terms of biological role, binds to the 23S rRNA. The chain is Large ribosomal subunit protein bL9 from Streptococcus sanguinis (strain SK36).